The primary structure comprises 537 residues: CTP synthase (537 aa).

Positions 1-268 (MNTKYIFVTG…DNLVCKKLKL (268 aa)) are amidoligase domain. Ser-14 contacts CTP. Ser-14 provides a ligand contact to UTP. 15–20 (SLGKGI) serves as a coordination point for ATP. Residue Tyr-55 coordinates L-glutamine. Asp-72 serves as a coordination point for ATP. Residues Asp-72 and Glu-142 each coordinate Mg(2+). CTP contacts are provided by residues 149–151 (DIE), 189–194 (KTKPTQ), and Lys-225. UTP contacts are provided by residues 189 to 194 (KTKPTQ) and Lys-225. Residues 293–535 (NIALVGKYVE…IKASLNSKHK (243 aa)) form the Glutamine amidotransferase type-1 domain. Residue Gly-355 coordinates L-glutamine. Cys-382 (nucleophile; for glutamine hydrolysis) is an active-site residue. Residues 383–386 (LGMQ), Glu-406, and Arg-463 each bind L-glutamine. Catalysis depends on residues His-508 and Glu-510.

The protein belongs to the CTP synthase family. As to quaternary structure, homotetramer.

It carries out the reaction UTP + L-glutamine + ATP + H2O = CTP + L-glutamate + ADP + phosphate + 2 H(+). The enzyme catalyses L-glutamine + H2O = L-glutamate + NH4(+). It catalyses the reaction UTP + NH4(+) + ATP = CTP + ADP + phosphate + 2 H(+). It functions in the pathway pyrimidine metabolism; CTP biosynthesis via de novo pathway; CTP from UDP: step 2/2. With respect to regulation, allosterically activated by GTP, when glutamine is the substrate; GTP has no effect on the reaction when ammonia is the substrate. The allosteric effector GTP functions by stabilizing the protein conformation that binds the tetrahedral intermediate(s) formed during glutamine hydrolysis. Inhibited by the product CTP, via allosteric rather than competitive inhibition. In terms of biological role, catalyzes the ATP-dependent amination of UTP to CTP with either L-glutamine or ammonia as the source of nitrogen. Regulates intracellular CTP levels through interactions with the four ribonucleotide triphosphates. The chain is CTP synthase from Clostridium kluyveri (strain ATCC 8527 / DSM 555 / NBRC 12016 / NCIMB 10680 / K1).